Consider the following 884-residue polypeptide: Alanine--tRNA ligase (884 aa).

Residues His572, His576, Cys673, and His677 each contribute to the Zn(2+) site.

Belongs to the class-II aminoacyl-tRNA synthetase family. Requires Zn(2+) as cofactor.

Its subcellular location is the cytoplasm. It carries out the reaction tRNA(Ala) + L-alanine + ATP = L-alanyl-tRNA(Ala) + AMP + diphosphate. In terms of biological role, catalyzes the attachment of alanine to tRNA(Ala) in a two-step reaction: alanine is first activated by ATP to form Ala-AMP and then transferred to the acceptor end of tRNA(Ala). Also edits incorrectly charged Ser-tRNA(Ala) and Gly-tRNA(Ala) via its editing domain. The polypeptide is Alanine--tRNA ligase (Xylella fastidiosa (strain M12)).